A 1157-amino-acid chain; its full sequence is Hephaestin (1157 aa).

The signal sequence occupies residues 1-18 (MKAGHLLWALLLMHSLWS). Over 19–1109 (IPTDGAIRNY…PIKDVEILSS (1091 aa)) the chain is Extracellular. Plastocyanin-like domains follow at residues 24 to 206 (AIRN…LITC), 218 to 366 (QRKD…VDSC), 370 to 559 (PPVD…LLVC), 569 to 717 (KQKG…VSQC), 730 to 902 (ASRV…LVIC), and 910 to 1066 (NGGR…SHEE). N-linked (GlcNAc...) asparagine glycans are attached at residues Asn49 and Asn54. Na(+) contacts are provided by Gly70 and Tyr73. Residues His126 and His128 each coordinate Cu(2+). His126 contributes to the O2 binding site. The Ca(2+) site is built by Lys134, Asp152, and Asp153. Asn164 carries an N-linked (GlcNAc...) asparagine glycan. A disulfide bond links Cys180 and Cys206. His186 and His188 together coordinate Cu(2+). His186 contacts O2. Residue Asn236 is glycosylated (N-linked (GlcNAc...) asparagine). Ser265 contacts Na(+). The cysteines at positions 285 and 366 are disulfide-linked. Cu(2+) is bound by residues His304, Cys347, and His352. 3 residues coordinate Na(+): Tyr416, Gly425, and Tyr428. Cys533 and Cys559 are disulfide-bonded. N-linked (GlcNAc...) asparagine glycosylation is present at Asn587. Ser616 is a binding site for Na(+). Cys636 and Cys717 are oxidised to a cystine. 4 residues coordinate Cu(2+): His655, Cys698, His703, and Met708. Residues Asn713 and Asn757 are each glycosylated (N-linked (GlcNAc...) asparagine). Phe768 and Gly777 together coordinate Na(+). Cys876 and Cys902 are oxidised to a cystine. Asn930 carries an N-linked (GlcNAc...) asparagine glycan. Cu(2+)-binding residues include His999, His1002, His1004, His1044, Cys1045, His1046, His1050, and Met1055. 2 residues coordinate O2: His1002 and His1004. His1046 is an O2 binding site. A helical transmembrane segment spans residues 1110–1130 (ALIAICVLLLLIALALGGVVW). Topologically, residues 1131–1157 (YQHRQRKLRRNRRSILDDSFKLLSLKQ) are cytoplasmic. Residues Ser1144, Ser1149, and Ser1154 each carry the phosphoserine modification.

Belongs to the multicopper oxidase family. Part of a complex composed of SLC40A1/ferroportin, TF/transferrin and HEPH/hephaestin that transfers iron from cells to transferrin. Cu cation is required as a cofactor.

It is found in the basolateral cell membrane. The catalysed reaction is 4 Fe(2+) + O2 + 4 H(+) = 4 Fe(3+) + 2 H2O. Plasma membrane ferroxidase that mediates the extracellular conversion of ferrous/Fe(2+) iron into its ferric/Fe(3+) form. Couples ferroportin which specifically exports ferrous/Fe(2+) iron from cells to transferrin that only binds and shuttles extracellular ferric/Fe(3+) iron throughout the body. By helping iron transfer from cells to blood mainly contributes to dietary iron absorption by the intestinal epithelium and more generally regulates iron levels in the body. In Mus musculus (Mouse), this protein is Hephaestin.